Here is a 307-residue protein sequence, read N- to C-terminus: Deaminated glutathione amidase, chloroplastic/cytosolic (307 aa).

A chloroplast-targeting transit peptide spans 1–36 (MNAYSVSLDFTKPSLFTRITLSSQIPLTMATTVNKT). The CN hydrolase domain maps to 37–286 (VRVAAAQMTS…TGIVVADIDF (250 aa)). Glu76 functions as the Proton acceptor in the catalytic mechanism. The active-site Proton donor is the Lys147. The Nucleophile role is filled by Cys188.

This sequence belongs to the nitrilase superfamily. NIT1/NIT2 family.

Its subcellular location is the plastid. The protein localises to the chloroplast. The protein resides in the cytoplasm. It carries out the reaction N-(4-oxoglutaryl)-L-cysteinylglycine + H2O = L-cysteinylglycine + 2-oxoglutarate. The catalysed reaction is N-(4-carboxy-4-oxobutanoyl)-L-ethylglycylglycine + H2O = N-(2-aminobutanoyl)glycine + 2-oxoglutarate. Functionally, catalyzes the hydrolysis of the amide bond in N-(4-oxoglutarate)-L-cysteinylglycine (deaminated glutathione), a metabolite repair reaction to dispose of the harmful deaminated glutathione. Possesses amidase activity toward deaminated ophthalmate in vitro. The protein is Deaminated glutathione amidase, chloroplastic/cytosolic of Arabidopsis thaliana (Mouse-ear cress).